The chain runs to 143 residues: Small ribosomal subunit protein uS11c (143 aa).

This sequence belongs to the universal ribosomal protein uS11 family. In terms of assembly, part of the 30S ribosomal subunit.

Its subcellular location is the plastid. It is found in the chloroplast. The polypeptide is Small ribosomal subunit protein uS11c (Brachypodium distachyon (Purple false brome)).